We begin with the raw amino-acid sequence, 292 residues long: Lipoyl synthase (292 aa).

Positions 38, 43, 49, 64, 68, 71, and 277 each coordinate [4Fe-4S] cluster. The Radical SAM core domain occupies 50–266; that stretch reads WSKGTATFML…KNRAESLGFR (217 aa).

Belongs to the radical SAM superfamily. Lipoyl synthase family. It depends on [4Fe-4S] cluster as a cofactor.

The protein resides in the cytoplasm. It carries out the reaction [[Fe-S] cluster scaffold protein carrying a second [4Fe-4S](2+) cluster] + N(6)-octanoyl-L-lysyl-[protein] + 2 oxidized [2Fe-2S]-[ferredoxin] + 2 S-adenosyl-L-methionine + 4 H(+) = [[Fe-S] cluster scaffold protein] + N(6)-[(R)-dihydrolipoyl]-L-lysyl-[protein] + 4 Fe(3+) + 2 hydrogen sulfide + 2 5'-deoxyadenosine + 2 L-methionine + 2 reduced [2Fe-2S]-[ferredoxin]. It functions in the pathway protein modification; protein lipoylation via endogenous pathway; protein N(6)-(lipoyl)lysine from octanoyl-[acyl-carrier-protein]: step 2/2. Its function is as follows. Catalyzes the radical-mediated insertion of two sulfur atoms into the C-6 and C-8 positions of the octanoyl moiety bound to the lipoyl domains of lipoate-dependent enzymes, thereby converting the octanoylated domains into lipoylated derivatives. In Chlorobium limicola (strain DSM 245 / NBRC 103803 / 6330), this protein is Lipoyl synthase.